The primary structure comprises 187 residues: Serine/arginine-rich splicing factor RSZ21 (187 aa).

Residues 2–73 (TRVYVGNLDP…WRVELSHKDK (72 aa)) enclose the RRM domain. Disordered stretches follow at residues 68–89 (LSHK…IEDS) and 105–187 (RRGR…ANGV). A CCHC-type zinc finger spans residues 89 to 106 (SKCYECGELGHFARECRR). Positions 107-122 (GRGSVRRRSPSPRRRR) are enriched in basic residues. Phosphoserine is present on residues Ser-123, Ser-132, Ser-134, Ser-140, Ser-146, and Ser-159. Basic residues predominate over residues 136 to 155 (RGRRSPPRRRSVTPPRRGRS). Residues 165-177 (SRRDSPRRRDSPY) show a composition bias toward basic and acidic residues. A compositionally biased stretch (low complexity) spans 178–187 (GRRSPYANGV). At Ser-181 the chain carries Phosphoserine.

The protein belongs to the splicing factor SR family. RSZ subfamily. Component of the spliceosome. Interacts with SNRNP35, AFC2, CYP59, RS2Z33 and RNU1. Interacts with MOS14. In terms of processing, extensively phosphorylated on serine residues in the RS domain. Phosphorylated by AFC2. In terms of tissue distribution, expressed in roots, leaves, flowers and siliques.

It is found in the nucleus speckle. In terms of biological role, probably involved in intron recognition and spliceosome assembly. The protein is Serine/arginine-rich splicing factor RSZ21 (RSZ21) of Arabidopsis thaliana (Mouse-ear cress).